Reading from the N-terminus, the 1030-residue chain is Importin beta-like SAD2 homolog (1030 aa).

Met1 carries the N-acetylmethionine modification. One can recognise an Importin N-terminal domain in the interval 25 to 99 (AEQSLNQLQH…RNQILVFVSQ (75 aa)). Disordered regions lie at residues 886–928 (AAKA…GSTL) and 940–964 (SYSDDDDFSDDDFSDDEELESPIDE). Acidic residues-rich tracts occupy residues 890–924 (EEEEEDEDGDDDDMDEFQTDDEDEDGDDENPDETD) and 943–964 (DDDDFSDDDFSDDEELESPIDE).

The protein belongs to the importin beta family.

The protein resides in the cytoplasm. It localises to the nucleus. In terms of biological role, functions probably in nuclear protein import, either by acting as autonomous nuclear transport receptor or as an adapter-like protein in association with other importin subunits. This chain is Importin beta-like SAD2 homolog, found in Arabidopsis thaliana (Mouse-ear cress).